The primary structure comprises 149 residues: D-aminoacyl-tRNA deacylase (149 aa).

Residues 137-138 carry the Gly-cisPro motif, important for rejection of L-amino acids motif; the sequence is GP.

The protein belongs to the DTD family. As to quaternary structure, homodimer.

The protein resides in the cytoplasm. The catalysed reaction is glycyl-tRNA(Ala) + H2O = tRNA(Ala) + glycine + H(+). The enzyme catalyses a D-aminoacyl-tRNA + H2O = a tRNA + a D-alpha-amino acid + H(+). In terms of biological role, an aminoacyl-tRNA editing enzyme that deacylates mischarged D-aminoacyl-tRNAs. Also deacylates mischarged glycyl-tRNA(Ala), protecting cells against glycine mischarging by AlaRS. Acts via tRNA-based rather than protein-based catalysis; rejects L-amino acids rather than detecting D-amino acids in the active site. By recycling D-aminoacyl-tRNA to D-amino acids and free tRNA molecules, this enzyme counteracts the toxicity associated with the formation of D-aminoacyl-tRNA entities in vivo and helps enforce protein L-homochirality. The sequence is that of D-aminoacyl-tRNA deacylase from Thioalkalivibrio sulfidiphilus (strain HL-EbGR7).